The primary structure comprises 613 residues: Ribosome-associated molecular chaperone SSB2 (613 aa).

Alanine 2 bears the N-acetylalanine mark. The interval 2–391 is nucleotide binding domain (NBD); it reads AEGVFQGAIG…ILTGQSTSDE (390 aa). An ATP-binding site is contributed by 16–18; it reads TTY. Residue threonine 47 is modified to Phosphothreonine. Residues lysine 73, 205 to 207, 271 to 278, and glycine 342 each bind ATP; these read GGT and ERAKRTLS. The inter-domain linker stretch occupies residues 392–402; the sequence is TKDLLLLDVAP. Positions 403 to 613 are substrate binding domain (SBD); it reads LSLGVGMQGD…RVVTKAMSSR (211 aa). A Contributes to ribosome binding motif is present at residues 428-430; the sequence is KRR. Threonine 431 bears the Phosphothreonine mark. The segment at 516-612 is lid domain (SBDalpha); that stretch reads SEEIEKMVNQ…KRVVTKAMSS (97 aa). Positions 574-582 match the Nuclear export signal motif; that stretch reads IEAALSDAL. The tract at residues 601 to 613 is required for interaction with ribosomes; sequence GLKRVVTKAMSSR.

This sequence belongs to the heat shock protein 70 family. Ssb-type Hsp70 subfamily. In terms of assembly, binds to ribosomes. Binds close to the ribosomal tunnel exit via contacts with both ribosomal proteins RPL35, RPL39 and RPL19, and rRNA. Directly interacts with nascent polypeptides. This interaction is dependent on the ribosome-associated complex (RAC). Interacts with SSE1.

It is found in the cytoplasm. The catalysed reaction is ATP + H2O = ADP + phosphate + H(+). Ribosome-bound, Hsp70-type chaperone that assists in the cotranslational folding of newly synthesized proteins in the cytosol. Stimulates folding by interacting with nascent chains, binding to short, largely hydrophobic sequences exposed by unfolded proteins, thereby stabilizing longer, more slowly translated, and aggregation-prone nascent polypeptides and domains that cannot fold stably until fully synthesized. The Hsp70-protein substrate interaction depends on ATP-binding and on allosteric regulation between the NBD and the SBD. The ATP-bound state is characterized by a fast exchange rate of substrate (low affinity state), while in the ADP-bound state exchange is much slower (high affinity state). During the Hsp70 cycle, the chaperone switches between the ATP-bound state (open conformation) and the ADP-bound state (closed conformation) by major conformational rearrangements involving mainly the lid domain. Ssb cooperates with a specific Hsp40/Hsp70 co-chaperone termed the ribosome-associated complex (RAC), which stimulates the ATPase activity of the ribosome-associated pool of Ssbs and switches it to the high affinity substrate binding state. Hsp110 chaperone SSE1 and FES1 act as nucleotide exchange factors that cause substrate release. The protein is Ribosome-associated molecular chaperone SSB2 of Saccharomyces cerevisiae (strain ATCC 204508 / S288c) (Baker's yeast).